A 442-amino-acid chain; its full sequence is UDP-N-acetylglucosamine--peptide N-acetylglucosaminyltransferase stabilizing protein GtfB (442 aa).

The protein belongs to the GtfB family. Interacts with glycosyltransferase GtfA (Gtf1). Interacts with glycosyltransferase GtfA; probably forms a heterotetramer with 2 subunits each of GtfA and GtfB. Part of the accessory SecA2/SecY2 protein translocation apparatus.

The protein localises to the cell membrane. It functions in the pathway protein modification; protein glycosylation. Functionally, required for the polymorphic O-glycosylation of the serine-rich repeat protein Srr2. A stabilizing protein that is part of the accessory SecA2/SecY2 system specifically required to export serine-rich repeat proteins, probably Srr2 in this organism. The GtfA-GtfB (Gtf1-Gtf2 in this bacteria) complex adds GlcNAc from UDP-GlcNAc to Srr2 substrate, attaching the first sugar residue. Stabilizes the glycosylation activity of GtfA in vivo. Upon expression in a gtfB deletion mutant of S.parasanguis, GtfB confers incorrect glycosylation and partial complementation of a biofilm formation defect, while GtfA/GtfB restores correct expression of serine-rich repeat protein Fap1 and completely restores a biofilm formation defect in a S.parasanguis double gtfA-gtfB deletion. This chain is UDP-N-acetylglucosamine--peptide N-acetylglucosaminyltransferase stabilizing protein GtfB, found in Streptococcus agalactiae.